A 275-amino-acid chain; its full sequence is 2,3,4,5-tetrahydropyridine-2,6-dicarboxylate N-succinyltransferase (275 aa).

Residues R106 and D143 each contribute to the substrate site.

Belongs to the transferase hexapeptide repeat family. Homotrimer.

The protein resides in the cytoplasm. It carries out the reaction (S)-2,3,4,5-tetrahydrodipicolinate + succinyl-CoA + H2O = (S)-2-succinylamino-6-oxoheptanedioate + CoA. It functions in the pathway amino-acid biosynthesis; L-lysine biosynthesis via DAP pathway; LL-2,6-diaminopimelate from (S)-tetrahydrodipicolinate (succinylase route): step 1/3. The chain is 2,3,4,5-tetrahydropyridine-2,6-dicarboxylate N-succinyltransferase from Rickettsia bellii (strain RML369-C).